Consider the following 577-residue polypeptide: MLGIFFLGVLAPASLGLSALAKLQPTGSQCVEHECFALFQGPATFLDASQACQRLQGHLMTVRSSVAADVISLLLSQSSMDLGPWIGLQLPQGCDDPVHLGPLRGFQWVTGDNHTSYSRWARPNDQTAPLCGPLCVTVSTATEAAPGEPAWEEKPCETETQGFLCEFYFTASCRPLTVNTRDPEAAHISSTYNTPFGVSGADFQTLPVGSSAAVEPLGLELVCRAPPGTSEGHWAWEATGAWNCSVENGGCEYLCNRSTNEPRCLCPRDMDLQADGRSCARPVVQSCNELCEHFCVSNAEVPGSYSCMCETGYQLAADGHRCEDVDDCKQGPNPCPQLCVNTKGGFECFCYDGYELVDGECVELLDPCFGSNCEFQCQPVSPTDYRCICAPGFAPKPDEPHKCEMFCNETSCPADCDPNSPTVCECPEGFILDEGSVCTDIDECSQGECFTSECRNFPGSYECICGPDTALAGQISKDCDPIPVREDTKEEEGSGEPPVSPTPGSPTGPPSARPVHSGVLIGISIASLSLVVALLALLCHLRKKQGAARAELEYKCASSAKEVVLQHVRTDRTLQKF.

An N-terminal signal peptide occupies residues 1–16; it reads MLGIFFLGVLAPASLG. The Extracellular segment spans residues 17–517; sequence LSALAKLQPT…GPPSARPVHS (501 aa). Residues 31–167 form the C-type lectin domain; that stretch reads VEHECFALFQ…TETQGFLCEF (137 aa). Asn113 is a glycosylation site (N-linked (GlcNAc...) asparagine). Cys135 and Cys156 form a disulfide bridge. EGF-like domains lie at 240–280 and 283–323; these read GAWN…RSCA and VVQS…HRCE. N-linked (GlcNAc...) asparagine glycosylation is present at Asn243. 18 disulfides stabilise this stretch: Cys244/Cys255, Cys251/Cys264, Cys266/Cys279, Cys287/Cys295, Cys291/Cys307, Cys309/Cys322, Cys328/Cys339, Cys335/Cys348, Cys350/Cys361, Cys368/Cys377, Cys373/Cys387, Cys389/Cys403, Cys407/Cys416, Cys412/Cys424, Cys426/Cys438, Cys444/Cys454, Cys449/Cys463, and Cys465/Cys479. Asn256 carries N-linked (GlcNAc...) asparagine glycosylation. The region spanning 324–362 is the EGF-like 3; calcium-binding domain; the sequence is DVDDCKQGPNPCPQLCVNTKGGFECFCYDGYELVDGECV. EGF-like domains follow at residues 364 to 404 and 403 to 439; these read LLDP…HKCE and CEMFCNETSCPADCDPNSPTVCECPEGFILDEGSVCT. Asn408 carries N-linked (GlcNAc...) asparagine glycosylation. The 41-residue stretch at 440-480 folds into the EGF-like 6; calcium-binding domain; the sequence is DIDECSQGECFTSECRNFPGSYECICGPDTALAGQISKDCD. A disordered region spans residues 476–513; the sequence is SKDCDPIPVREDTKEEEGSGEPPVSPTPGSPTGPPSAR. The span at 477-492 shows a compositional bias: basic and acidic residues; it reads KDCDPIPVREDTKEEE. An O-linked (Xyl...) (chondroitin sulfate) serine glycan is attached at Ser494. Positions 498–512 are enriched in pro residues; that stretch reads PVSPTPGSPTGPPSA. Residues 518-541 form a helical membrane-spanning segment; it reads GVLIGISIASLSLVVALLALLCHL. Residues 542-577 are Cytoplasmic-facing; that stretch reads RKKQGAARAELEYKCASSAKEVVLQHVRTDRTLQKF.

In terms of assembly, interacts with ITGAL, ITGAM and ITGB2. Interacts with thrombin/F2; this interaction switches the specificity of thrombin from a procoagulant to an anticoagulant and antifibrinolytic protease. Interacts with ANGP1 and ANGP2; these interactions significantly inhibit the generation of activated PC and TAFIa/CPB2 by the thrombin/thrombomodulin complex. Interacts with PF4; this interaction enhances generation of activated protein C. Interacts with HMGB1; this interaction inhibits HMGB1 inflammatory activity. Endothelial cells are unique in synthesizing thrombomodulin.

It localises to the membrane. Endothelial cell receptor that plays a critical role in regulating several physiological processes including hemostasis, coagulation, fibrinolysis, inflammation, and angiogenesis. Acts as a cofactor for thrombin activation of protein C/PROC on the surface of vascular endothelial cells leading to initiation of the activated protein C anticoagulant pathway. Also accelerates the activation of the plasma carboxypeptidase B2/CPB2, which catalyzes removal of C-terminal basic amino acids from its substrates including kinins or anaphylatoxins leading to fibrinolysis inhibition. Plays critical protective roles in changing the cleavage specificity of protease-activated receptor 1/PAR1, inhibiting endothelial cell permeability and inflammation. Suppresses inflammation distinctly from its anticoagulant cofactor activity by sequestering HMGB1 thereby preventing it from engaging cellular receptors such as RAGE and contributing to the inflammatory response. The chain is Thrombomodulin (Thbd) from Mus musculus (Mouse).